The following is a 400-amino-acid chain: Tryptophan 2,3-dioxygenase (400 aa).

Residues Phe-75–His-79 and Arg-146 each bind substrate. Residue His-332 participates in heme binding. Thr-346 serves as a coordination point for substrate.

It belongs to the tryptophan 2,3-dioxygenase family. As to quaternary structure, homotetramer. Dimer of dimers. Requires heme as cofactor.

It catalyses the reaction L-tryptophan + O2 = N-formyl-L-kynurenine. The protein operates within amino-acid degradation; L-tryptophan degradation via kynurenine pathway; L-kynurenine from L-tryptophan: step 1/2. Its function is as follows. Heme-dependent dioxygenase that catalyzes the oxidative cleavage of the L-tryptophan (L-Trp) pyrrole ring and converts L-tryptophan to N-formyl-L-kynurenine. Catalyzes the oxidative cleavage of the indole moiety. This chain is Tryptophan 2,3-dioxygenase, found in Dictyostelium discoideum (Social amoeba).